Here is a 134-residue protein sequence, read N- to C-terminus: Protein Turandot E (134 aa).

The first 38 residues, 1–38 (MSNTRTVHSSTSISKMNSALQISCLLVVLGCLLGSGHC), serve as a signal peptide directing secretion.

Belongs to the Turandot family.

The protein resides in the secreted. Its function is as follows. A humoral factor that may play a role in stress tolerance. The sequence is that of Protein Turandot E from Drosophila melanogaster (Fruit fly).